The primary structure comprises 83 residues: Snake venom metalloproteinase BnP1 (83 aa).

Residues serine 8–isoleucine 83 enclose the Peptidase M12B domain. Glutamate 11, cysteine 77, and asparagine 80 together coordinate Ca(2+).

The protein belongs to the venom metalloproteinase (M12B) family. P-I subfamily. In terms of assembly, monomer. Zn(2+) serves as cofactor. In terms of tissue distribution, expressed by the venom gland.

The protein resides in the secreted. Inhibited by EDTA. Its function is as follows. This protein is a zinc protease from snake venom that is devoid of significant myotoxic and hemorrhagic activities. It hydrolyzes the Aalpha-chain and more slowly the Bbeta-chain of fibrin and fibrinogen, without affecting the gamma-chains. It induces cell detachment and a apoptosis (anoikis) in endothelial cells. The polypeptide is Snake venom metalloproteinase BnP1 (Bothrops pauloensis (Neuwied's lancehead)).